A 156-amino-acid chain; its full sequence is Putative pre-16S rRNA nuclease (156 aa).

The protein belongs to the YqgF nuclease family.

The protein localises to the cytoplasm. Could be a nuclease involved in processing of the 5'-end of pre-16S rRNA. The chain is Putative pre-16S rRNA nuclease from Albidiferax ferrireducens (strain ATCC BAA-621 / DSM 15236 / T118) (Rhodoferax ferrireducens).